A 347-amino-acid polypeptide reads, in one-letter code: NADH-ubiquinone oxidoreductase chain 2 (347 aa).

A run of 10 helical transmembrane segments spans residues 1 to 21, 25 to 45, 59 to 79, 111 to 131, 149 to 169, 178 to 198, 201 to 221, 237 to 257, 274 to 294, and 326 to 346; these read MNPL…AIVA, HWLM…PILM, YFLT…MNLV, FHFW…LILL, INLD…GWGG, IMAY…TYNP, TLLN…MFML, MPLL…LPPL, NSVI…YFYM, and LSPL…LALL.

It belongs to the complex I subunit 2 family. As to quaternary structure, core subunit of respiratory chain NADH dehydrogenase (Complex I) which is composed of 45 different subunits. Interacts with TMEM242.

It localises to the mitochondrion inner membrane. The enzyme catalyses a ubiquinone + NADH + 5 H(+)(in) = a ubiquinol + NAD(+) + 4 H(+)(out). Its function is as follows. Core subunit of the mitochondrial membrane respiratory chain NADH dehydrogenase (Complex I) which catalyzes electron transfer from NADH through the respiratory chain, using ubiquinone as an electron acceptor. Essential for the catalytic activity and assembly of complex I. In Pteropus rodricensis (Rodriguez flying fox), this protein is NADH-ubiquinone oxidoreductase chain 2.